The chain runs to 356 residues: Cyanide hydratase (356 aa).

The region spanning 8 to 287 (YKAAAVNAEP…EGLLFVDIDL (280 aa)) is the CN hydrolase domain. Catalysis depends on Glu48, which acts as the Proton acceptor. Lys130 is an active-site residue. Cys165 functions as the Nucleophile in the catalytic mechanism.

Belongs to the carbon-nitrogen hydrolase superfamily. Nitrilase family. In terms of assembly, oligomer of dimers, forming left-handed helical fibers.

It carries out the reaction formamide = hydrogen cyanide + H2O. Its function is as follows. Catalyzes the hydration of cyanide to formamide. Degradation of cyanide may be important for plant pathogenic fungi in infection of cyanogenic plants. Can also transform some nitriles like 2-cyanopyridine and fumaronitrile. This Aspergillus niger protein is Cyanide hydratase.